We begin with the raw amino-acid sequence, 505 residues long: Kinesin light chain 3 (505 aa).

The tract at residues 1-20 (MSVQVAAPGGLGLGLERPSP) is disordered. A coiled-coil region spans residues 88–150 (LLALSAHVGA…EEEKSHLEFL (63 aa)). Positions 157–193 (DPPAESQQPESPPRRDSLASLFPSEEEERRGPEAVGA) are disordered. S173 bears the Phosphoserine mark. TPR repeat units follow at residues 207–240 (LRTLHNLVIQYAGQGRYEVAVPLCRQALEDLERS), 249–282 (ATMLNILALVYRDQNKYKEATDLLHDALQIREQT), 291–324 (AATLNNLAVLYGKRGRYREAEPLCQRALEIREKV), 333–366 (AKQLNNLALLCQNQGKFEEVERHYARALSIYEAL), and 375–408 (AKTKNNLASAYLKQNKYQQAEELYKEILHREALP). The segment at 409-505 (APLGAPNTGT…STSTQDLGPR (97 aa)) is disordered. The segment covering 416–434 (TGTTSDTQQQTLSRSSSFS) has biased composition (low complexity). The span at 435 to 453 (KLRESIRRGSEKLVSRLRG) shows a compositional bias: basic and acidic residues. S467 bears the Phosphoserine mark. Positions 489–505 (SEASRTLSTSTQDLGPR) are enriched in polar residues. T499 is modified (phosphothreonine).

It belongs to the kinesin light chain family. Oligomer composed of two heavy chains and two light chains. Associates with microtubulin in an ATP-dependent manner. Interacts with KIF5C. Interacts with ODF1. Interacts with LRGUK. Interacts with VDAC2.

It is found in the cytoplasm. Its subcellular location is the cytoskeleton. The protein resides in the mitochondrion. Its function is as follows. Kinesin is a microtubule-associated force-producing protein that may play a role in organelle transport. Plays a role during spermiogenesis in the development of the sperm tail midpiece and in the normal function of spermatozoa. May play a role in the formation of the mitochondrial sheath formation in the developing spermatid midpiece. The polypeptide is Kinesin light chain 3 (KLC3) (Bos taurus (Bovine)).